Reading from the N-terminus, the 547-residue chain is MTAKDIIFDSDARAKLKVGVDKLANAVKVTLGPAGRNVLIDKKFGAPTSTKDGVTVAKEIELADAVENMGAQMVREVASKTSDVAGDGTTTATVLAQAIYREGLKNVAAGARPIDLKRGIDRAVKEVVLELRNISRSISGKKEIAQVGTISANNDPEIGELIAEAMDKVGKDGVITVEEAKGMDTELKVVEGMQFDRGYLSPYFVTNPENMEAELEDPLILIHDKKISNMKELLPILEKSAQSGRPLLIISEDIEGEALATLVVNRLRGTLKVCAVKAPGFGDRRKAMLEDIAILTGGTVISEEKGYKLENATLTYLGQAGRITVDKDNTTVVEGKGKPEEIKARINEIKGQIEKSTSDYDTEKLQERLAKLSGGVAVLNIGASTEVEMKEKKARVEDALHATRAAVQEGIVVGGGVALIRAIKGLDNAVADNEDQKTGIEIIRRALEEPLRQIVANTGTTDGAVVLEKVKNGEGDFGFNARTEQYENLVEAGVVDPTKVTRSALENAASVASILLTTEAAITDIKEEKSDMPAMPPGGMGGMGGMY.

ATP contacts are provided by residues 30–33 (TLGP), Lys51, 87–91 (DGTTT), Gly415, and Asp496.

The protein belongs to the chaperonin (HSP60) family. In terms of assembly, forms a cylinder of 14 subunits composed of two heptameric rings stacked back-to-back. Interacts with the co-chaperonin GroES.

Its subcellular location is the cytoplasm. It catalyses the reaction ATP + H2O + a folded polypeptide = ADP + phosphate + an unfolded polypeptide.. Together with its co-chaperonin GroES, plays an essential role in assisting protein folding. The GroEL-GroES system forms a nano-cage that allows encapsulation of the non-native substrate proteins and provides a physical environment optimized to promote and accelerate protein folding. The polypeptide is Chaperonin GroEL (Chlorobium phaeobacteroides (strain DSM 266 / SMG 266 / 2430)).